The sequence spans 370 residues: Phosphate acyltransferase (370 aa).

The disordered stretch occupies residues 349-370 (SAGRAGQDAPDEMAAPGRSEKR).

Belongs to the PlsX family. In terms of assembly, homodimer. Probably interacts with PlsY.

The protein resides in the cytoplasm. The enzyme catalyses a fatty acyl-[ACP] + phosphate = an acyl phosphate + holo-[ACP]. It functions in the pathway lipid metabolism; phospholipid metabolism. In terms of biological role, catalyzes the reversible formation of acyl-phosphate (acyl-PO(4)) from acyl-[acyl-carrier-protein] (acyl-ACP). This enzyme utilizes acyl-ACP as fatty acyl donor, but not acyl-CoA. This is Phosphate acyltransferase from Cereibacter sphaeroides (strain ATCC 17023 / DSM 158 / JCM 6121 / CCUG 31486 / LMG 2827 / NBRC 12203 / NCIMB 8253 / ATH 2.4.1.) (Rhodobacter sphaeroides).